Consider the following 491-residue polypeptide: Aspartyl/glutamyl-tRNA(Asn/Gln) amidotransferase subunit B (491 aa).

Belongs to the GatB/GatE family. GatB subfamily. In terms of assembly, heterotrimer of A, B and C subunits.

The enzyme catalyses L-glutamyl-tRNA(Gln) + L-glutamine + ATP + H2O = L-glutaminyl-tRNA(Gln) + L-glutamate + ADP + phosphate + H(+). It catalyses the reaction L-aspartyl-tRNA(Asn) + L-glutamine + ATP + H2O = L-asparaginyl-tRNA(Asn) + L-glutamate + ADP + phosphate + 2 H(+). Functionally, allows the formation of correctly charged Asn-tRNA(Asn) or Gln-tRNA(Gln) through the transamidation of misacylated Asp-tRNA(Asn) or Glu-tRNA(Gln) in organisms which lack either or both of asparaginyl-tRNA or glutaminyl-tRNA synthetases. The reaction takes place in the presence of glutamine and ATP through an activated phospho-Asp-tRNA(Asn) or phospho-Glu-tRNA(Gln). This Burkholderia ambifaria (strain ATCC BAA-244 / DSM 16087 / CCUG 44356 / LMG 19182 / AMMD) (Burkholderia cepacia (strain AMMD)) protein is Aspartyl/glutamyl-tRNA(Asn/Gln) amidotransferase subunit B.